A 63-amino-acid polypeptide reads, in one-letter code: Beta-defensin 3 (63 aa).

A signal peptide spans 1 to 20 (MRIHYLLFAFLLVLLSPPAA). Residues 21–22 (FS) constitute a propeptide that is removed on maturation. Cystine bridges form between C31/C59, C38/C52, and C42/C60.

This sequence belongs to the beta-defensin family. LAP/TAP subfamily. As to expression, highest expression in salivary glands, epididymis, ovary and pancreas and to a lesser extent in lung, liver and brain. Low or no expression in skeletal muscle and tongue.

It localises to the secreted. Antimicrobial activity against Gram-negative bacteria E.coli and P.aeruginosa. The polypeptide is Beta-defensin 3 (Defb3) (Mus musculus (Mouse)).